Reading from the N-terminus, the 753-residue chain is Ion-translocating oxidoreductase complex subunit C (753 aa).

4Fe-4S ferredoxin-type domains follow at residues 367 to 397 and 407 to 436; these read EMGEPQEEKGCIRCSACADACPADLLPQQLY and KATAHNLADCIECGACAWVCPSNIPLVQYF. [4Fe-4S] cluster contacts are provided by Cys377, Cys380, Cys383, Cys387, Cys416, Cys419, Cys422, and Cys426. Disordered stretches follow at residues 517–561, 606–625, 640–659, and 705–735; these read AKPD…RKAA, RKAEQQVAPVEAPVAEPVDP, and AKARKAEQQAAQPDLASAAANDDPRKAAVAA. The segment covering 526 to 537 has biased composition (basic and acidic residues); it reads AAREARKAEARA. Composition is skewed to low complexity over residues 610–622, 644–656, and 712–735; these read QQVAPVEAPVAEP and QQAAQPDLASAAANDDPRKAAVAA.

This sequence belongs to the 4Fe4S bacterial-type ferredoxin family. RnfC subfamily. In terms of assembly, the complex is composed of six subunits: RnfA, RnfB, RnfC, RnfD, RnfE and RnfG. [4Fe-4S] cluster is required as a cofactor.

The protein resides in the cell inner membrane. Part of a membrane-bound complex that couples electron transfer with translocation of ions across the membrane. This chain is Ion-translocating oxidoreductase complex subunit C, found in Klebsiella pneumoniae (strain 342).